The following is a 267-amino-acid chain: 27 kDa primary mesenchyme-specific spicule protein (267 aa).

The first 16 residues, 1 to 16, serve as a signal peptide directing secretion; that stretch reads MKLLAILLVLPALCFG. The segment at 20–64 is 11 X 4 AA tandem repeats of G-[PQ]-G-[MQ]; that stretch reads EGPGMGPGMGPGMGPGMGPGMGPGMGPGMGPGMGPGQGQGQGQGQ. Tandem repeats lie at residues 21–24, 25–28, 29–32, 33–36, 37–40, 41–44, 45–48, 49–52, 53–56, 57–60, and 61–64. Residues 44–68 form a disordered region; that stretch reads MGPGMGPGMGPGQGQGQGQGQGQVG. The C-type lectin domain maps to 79–220; the sequence is IGQQCFKMMS…CDEPMYFACS (142 aa). Intrachain disulfides connect C100-C219 and C197-C211.

In terms of tissue distribution, expressed specifically in the micromere/primary mesenchyme cells (PMC) lineage. Produced uniformly and exclusively by PMCs through the early prism stage and this specificity is further restricted during skeletogenesis to a subpopulation of PMCs associated with the growing tips of the spicules.

It is found in the secreted. In terms of biological role, may play a role in the regulation or execution of skeletal growth. The chain is 27 kDa primary mesenchyme-specific spicule protein (PM27) from Strongylocentrotus purpuratus (Purple sea urchin).